Consider the following 134-residue polypeptide: MGKDTIADIITSIRNADMNRKGMVRIESTNITESIVKILLREGFVENVRKHRENNHYFLILTLRHRRNKKESYKTFLNLKRISRPGLRIYSNSQRIPRILGGIGIVILSTSQGIMTDREARLKKIGGEILCYIW.

It belongs to the universal ribosomal protein uS8 family. Part of the 30S ribosomal subunit.

The protein resides in the plastid. Its subcellular location is the chloroplast. Its function is as follows. One of the primary rRNA binding proteins, it binds directly to 16S rRNA central domain where it helps coordinate assembly of the platform of the 30S subunit. The protein is Small ribosomal subunit protein uS8c (rps8) of Draba nemorosa (Woodland whitlowgrass).